The sequence spans 520 residues: Glutamate--cysteine ligase (520 aa).

The protein belongs to the glutamate--cysteine ligase type 1 family. Type 1 subfamily.

The enzyme catalyses L-cysteine + L-glutamate + ATP = gamma-L-glutamyl-L-cysteine + ADP + phosphate + H(+). Its pathway is sulfur metabolism; glutathione biosynthesis; glutathione from L-cysteine and L-glutamate: step 1/2. This is Glutamate--cysteine ligase from Sodalis glossinidius (strain morsitans).